A 114-amino-acid polypeptide reads, in one-letter code: Large ribosomal subunit protein uL22 (114 aa).

This sequence belongs to the universal ribosomal protein uL22 family. As to quaternary structure, part of the 50S ribosomal subunit.

This protein binds specifically to 23S rRNA; its binding is stimulated by other ribosomal proteins, e.g. L4, L17, and L20. It is important during the early stages of 50S assembly. It makes multiple contacts with different domains of the 23S rRNA in the assembled 50S subunit and ribosome. In terms of biological role, the globular domain of the protein is located near the polypeptide exit tunnel on the outside of the subunit, while an extended beta-hairpin is found that lines the wall of the exit tunnel in the center of the 70S ribosome. The protein is Large ribosomal subunit protein uL22 of Desulfosudis oleivorans (strain DSM 6200 / JCM 39069 / Hxd3) (Desulfococcus oleovorans).